A 222-amino-acid polypeptide reads, in one-letter code: Charged multivesicular body protein 4b (222 aa).

Disordered stretches follow at residues 1-21 (MSLIGKLFGTGGKGAKGPSPQ) and 177-222 (NLLE…WATA). Positions 21-182 (QEAIQKLRDT…ELDKNLLEVQ (162 aa)) form a coiled coil.

This sequence belongs to the SNF7 family. As to quaternary structure, probable core component of the endosomal sorting required for transport complex III (ESCRT-III). ESCRT-III components are thought to multimerize to form a flat lattice on the perimeter membrane of the endosome.

The protein resides in the cytoplasm. It is found in the cytosol. It localises to the late endosome membrane. Its subcellular location is the midbody. Functionally, probable core component of the endosomal sorting required for transport complex III (ESCRT-III) which is involved in multivesicular bodies (MVBs) formation and sorting of endosomal cargo proteins into MVBs. MVBs contain intraluminal vesicles (ILVs) that are generated by invagination and scission from the limiting membrane of the endosome and mostly are delivered to lysosomes enabling degradation of membrane proteins, such as stimulated growth factor receptors, lysosomal enzymes and lipids. The protein is Charged multivesicular body protein 4b (chmp4b) of Xenopus laevis (African clawed frog).